Here is a 402-residue protein sequence, read N- to C-terminus: MEWLAGGVTAPAGFVAAGACADIKGNGAGKKDVALLASRVPCAAAGVYTTNLVKAAPVVLTRGRTETGELQAVVANSGNANACTGEQGMRDAAEMARLAAEALGIRPELMGVASTGVIGVPLPMDRVSAGIRAAAAALSPEGGADAAEAIMTTDTFPKQAAARLEIGGATVTIGAMAKGSGMIHPNMATMLGFVTTDAAVDAAALREALREATDRSFNMITVDGDTSTNDMVLVLANGLAGNPRIMPGSAHYRAFADALAAVLIHLAKEIARDGEGATKLIEVRVKGAATLSDARKAARAVCGSNLVKAAVFGEDANWGRVLAALGYSGAQFDPGRVDLWLGDLQMMRAGEPVAFDEAAAARVLREKEVVFTADLHAGECEATAWGCDLTYDYVKINGSYRT.

Substrate contacts are provided by T152, K178, T189, E275, N397, and T402. The Nucleophile role is filled by T189.

This sequence belongs to the ArgJ family. Heterotetramer of two alpha and two beta chains.

It localises to the cytoplasm. It catalyses the reaction N(2)-acetyl-L-ornithine + L-glutamate = N-acetyl-L-glutamate + L-ornithine. The enzyme catalyses L-glutamate + acetyl-CoA = N-acetyl-L-glutamate + CoA + H(+). The protein operates within amino-acid biosynthesis; L-arginine biosynthesis; L-ornithine and N-acetyl-L-glutamate from L-glutamate and N(2)-acetyl-L-ornithine (cyclic): step 1/1. It functions in the pathway amino-acid biosynthesis; L-arginine biosynthesis; N(2)-acetyl-L-ornithine from L-glutamate: step 1/4. In terms of biological role, catalyzes two activities which are involved in the cyclic version of arginine biosynthesis: the synthesis of N-acetylglutamate from glutamate and acetyl-CoA as the acetyl donor, and of ornithine by transacetylation between N(2)-acetylornithine and glutamate. This is Arginine biosynthesis bifunctional protein ArgJ from Symbiobacterium thermophilum (strain DSM 24528 / JCM 14929 / IAM 14863 / T).